Reading from the N-terminus, the 245-residue chain is 5-oxoprolinase subunit A (245 aa).

The protein belongs to the LamB/PxpA family. Forms a complex composed of PxpA, PxpB and PxpC.

It catalyses the reaction 5-oxo-L-proline + ATP + 2 H2O = L-glutamate + ADP + phosphate + H(+). Its function is as follows. Catalyzes the cleavage of 5-oxoproline to form L-glutamate coupled to the hydrolysis of ATP to ADP and inorganic phosphate. The chain is 5-oxoprolinase subunit A from Cronobacter sakazakii (strain ATCC BAA-894) (Enterobacter sakazakii).